The primary structure comprises 725 residues: MSASDLTSVQAGAPQGRRQILVTSALPYANGQIHIGHLVEYIQTDIWVRTMRMHGHEIYYIGADDTHGTPVMLRAEQEGVSPKQLIERVWREHKRDFDSFGVSFDNFYTTDSDENRVLSETIYLALKEAGFIAEREIEQAYDPVRQMFLPDRFIKGECPKCHAKDQYGDSCEVCGTTYQPTDLIHPYSVVSGAAPVRKTSTHYFFRLSDPRCEAFLREWVSGLAQPEATNKMREWLGEAGEAKLADWDISRDAPYFGFEIPGAPGKYFYVWLDAPVGYYASFKNLCQRRGLDFDAWIRKDSTTEQYHFIGKDILYFHTLFWPAMLEFSGHRTPTNVFAHGFLTVDGAKMSKSRGTFITAQSYIDTGLNPEWLRYYFAAKLNATMEDIDLNLEDFQARVNSDLVGKYVNIASRAAGFLLKRFDGRVQASAMNHPLLATLRGAIPQIAAHYEAREYGRALRQTMELADAVNGYVDSAKPWELAKDPANAVALHETCSVSLEAFRLLSLALKPVLPRVAQGVEAFLGIAPLTWADAGMPLSPEQPVRAYQHLMTRVDPKQIDALLAANRGSLQGTAAAAEAGAANGNGAGSKNGKGAKAAAQPAASAANADDGASPIISIDDFAKIDLRIAKIVACQAVEGSDKLLQLTLDVGEERTRNVFSGIKSAYRPEQLVGKLTVMVANLAPRKMKFGLSEGMVLAASAADEKAEPGLYILEPHSGAKPGMRVK.

Positions 27-37 match the 'HIGH' region motif; the sequence is PYANGQIHIGH. Cysteine 158, cysteine 161, cysteine 171, and cysteine 174 together coordinate Zn(2+). The short motif at 348–352 is the 'KMSKS' region element; sequence KMSKS. Position 351 (lysine 351) interacts with ATP. Positions 619–725 constitute a tRNA-binding domain; sequence DFAKIDLRIA…SGAKPGMRVK (107 aa).

The protein belongs to the class-I aminoacyl-tRNA synthetase family. MetG type 1 subfamily. In terms of assembly, homodimer. The cofactor is Zn(2+).

The protein localises to the cytoplasm. The enzyme catalyses tRNA(Met) + L-methionine + ATP = L-methionyl-tRNA(Met) + AMP + diphosphate. In terms of biological role, is required not only for elongation of protein synthesis but also for the initiation of all mRNA translation through initiator tRNA(fMet) aminoacylation. In Burkholderia pseudomallei (strain 1106a), this protein is Methionine--tRNA ligase.